The primary structure comprises 282 residues: Leucine-rich protein (282 aa).

Not essential for viability or growth. Nevertheless, uncontrolled production in E.coli is detrimental to the normal physiology of the bacteria. In Streptococcus dysgalactiae subsp. equisimilis (Streptococcus equisimilis), this protein is Leucine-rich protein (lrp).